The primary structure comprises 303 residues: Flavin-dependent thymidylate synthase (303 aa).

Positions 1–21 (MALTSEQRAEIEAQRSEPQLT) are disordered. Positions 43–256 (GFLRVVDYMG…PATAAAFEEY (214 aa)) constitute a ThyX domain. FAD is bound by residues threonine 89, 112–114 (RHR), and glutamate 120. DUMP is bound by residues 109-112 (QWIR), 120-124 (EYSAR), and arginine 195. The short motif at 112 to 122 (RHRMASVNEYS) is the ThyX motif element. FAD is bound by residues 211-213 (DLH) and histidine 217. Arginine 222 lines the dUMP pocket. Arginine 222 serves as the catalytic Involved in ionization of N3 of dUMP, leading to its activation.

This sequence belongs to the thymidylate synthase ThyX family. As to quaternary structure, homotetramer. FAD is required as a cofactor.

The enzyme catalyses dUMP + (6R)-5,10-methylene-5,6,7,8-tetrahydrofolate + NADPH + H(+) = dTMP + (6S)-5,6,7,8-tetrahydrofolate + NADP(+). The protein operates within pyrimidine metabolism; dTTP biosynthesis. Its function is as follows. Catalyzes the reductive methylation of 2'-deoxyuridine-5'-monophosphate (dUMP) to 2'-deoxythymidine-5'-monophosphate (dTMP) while utilizing 5,10-methylenetetrahydrofolate (mTHF) as the methyl donor, and NADPH and FADH(2) as the reductant. The polypeptide is Flavin-dependent thymidylate synthase (Gluconobacter oxydans (strain 621H) (Gluconobacter suboxydans)).